The following is a 328-amino-acid chain: Ketol-acid reductoisomerase (NADP(+)) (328 aa).

Positions 2–181 (AKIYRETDAD…GFTRVGVIET (180 aa)) constitute a KARI N-terminal Rossmann domain. Residues 25–28 (YGIQ), Arg48, Ser52, and 82–85 (DMVQ) each bind NADP(+). The active site involves His107. Gly133 provides a ligand contact to NADP(+). Residues 182-327 (TFAEETETDL…EDLRRLMRSG (146 aa)) form the KARI C-terminal knotted domain. Residues Asp190, Glu194, Glu226, and Glu230 each coordinate Mg(2+). Ser251 lines the substrate pocket.

This sequence belongs to the ketol-acid reductoisomerase family. Mg(2+) serves as cofactor.

The catalysed reaction is (2R)-2,3-dihydroxy-3-methylbutanoate + NADP(+) = (2S)-2-acetolactate + NADPH + H(+). It carries out the reaction (2R,3R)-2,3-dihydroxy-3-methylpentanoate + NADP(+) = (S)-2-ethyl-2-hydroxy-3-oxobutanoate + NADPH + H(+). The protein operates within amino-acid biosynthesis; L-isoleucine biosynthesis; L-isoleucine from 2-oxobutanoate: step 2/4. Its pathway is amino-acid biosynthesis; L-valine biosynthesis; L-valine from pyruvate: step 2/4. In terms of biological role, involved in the biosynthesis of branched-chain amino acids (BCAA). Catalyzes an alkyl-migration followed by a ketol-acid reduction of (S)-2-acetolactate (S2AL) to yield (R)-2,3-dihydroxy-isovalerate. In the isomerase reaction, S2AL is rearranged via a Mg-dependent methyl migration to produce 3-hydroxy-3-methyl-2-ketobutyrate (HMKB). In the reductase reaction, this 2-ketoacid undergoes a metal-dependent reduction by NADPH to yield (R)-2,3-dihydroxy-isovalerate. This chain is Ketol-acid reductoisomerase (NADP(+)), found in Caldivirga maquilingensis (strain ATCC 700844 / DSM 13496 / JCM 10307 / IC-167).